Reading from the N-terminus, the 486-residue chain is MTTFYTVISWLMVFGYWLLIAGVTLRILMKRRAVPSAMAWLLVIYILPLFGIVAYLSFGELHLGKRRAERAKAMWPSTARWLSELKESQRIFATDYSEVARPLFQLCDRRQGIDGVKGNQLQLLTTTDATLKALIRDIELARHNIEMVFYIWQPGGLVDQVAESLMAAARRGVHCRLMLDSAGSLQFFRSPYPGMMRNAGIEVVEALKVNLFRVFLRRMDLRQHRKVVLIDNYIAYTGSMNMVDPRYFKQDAGVGQWIDLMARMEGPVASTMGIVYACDWEIETGKRILPPPPDVNIMPFEQESGHTIQVIASGPGFPEEMIHQALLTAVYSAREQLIMTTPYFVPSDDLLHAICTAALRGVEVSIIVPRDNDSTMVRWASRSFFSELLEAGVRIYQFEDGLLHTKSVLVDGQLSLVGTVNLDMRSLWLNFEITLVIDDDGFGSDLACVQDDYIARSQLLNAAEWQKRPFWHRIVERLFYFFSPLL.

Helical transmembrane passes span 3–23 (TFYTVISWLMVFGYWLLIAGV) and 38–58 (MAWLLVIYILPLFGIVAYLSF). PLD phosphodiesterase domains follow at residues 219–246 (MDLRQHRKVVLIDNYIAYTGSMNMVDPR) and 399–426 (EDGLLHTKSVLVDGQLSLVGTVNLDMRS). Active-site residues include H224, K226, D231, H404, K406, and D411.

Belongs to the phospholipase D family. Cardiolipin synthase subfamily. ClsA sub-subfamily.

Its subcellular location is the cell inner membrane. It carries out the reaction 2 a 1,2-diacyl-sn-glycero-3-phospho-(1'-sn-glycerol) = a cardiolipin + glycerol. Functionally, catalyzes the reversible phosphatidyl group transfer from one phosphatidylglycerol molecule to another to form cardiolipin (CL) (diphosphatidylglycerol) and glycerol. The sequence is that of Cardiolipin synthase A from Serratia proteamaculans (strain 568).